The primary structure comprises 138 residues: Nucleoside diphosphate kinase (138 aa).

Lys-9, Phe-57, Arg-85, Thr-91, Arg-102, and Asn-112 together coordinate ATP. The active-site Pros-phosphohistidine intermediate is the His-115.

The protein belongs to the NDK family. Homotetramer. Mg(2+) is required as a cofactor.

The protein resides in the cytoplasm. It catalyses the reaction a 2'-deoxyribonucleoside 5'-diphosphate + ATP = a 2'-deoxyribonucleoside 5'-triphosphate + ADP. The catalysed reaction is a ribonucleoside 5'-diphosphate + ATP = a ribonucleoside 5'-triphosphate + ADP. In terms of biological role, major role in the synthesis of nucleoside triphosphates other than ATP. The ATP gamma phosphate is transferred to the NDP beta phosphate via a ping-pong mechanism, using a phosphorylated active-site intermediate. The sequence is that of Nucleoside diphosphate kinase from Exiguobacterium sibiricum (strain DSM 17290 / CCUG 55495 / CIP 109462 / JCM 13490 / 255-15).